Here is a 148-residue protein sequence, read N- to C-terminus: Ubiquitin-conjugating enzyme E2-16 kDa (148 aa).

The region spanning 2 to 148 (SSSKRIAKEL…AKEWTKKYAV (147 aa)) is the UBC core domain. S12 carries the post-translational modification Phosphoserine. C86 acts as the Glycyl thioester intermediate in catalysis. K91 is covalently cross-linked (Glycyl lysine isopeptide (Lys-Gly) (interchain with G-Cter in ubiquitin)).

This sequence belongs to the ubiquitin-conjugating enzyme family. Component of the RSP5-UBA1-UBC5 ubiquitin ligase complex composed of E3 RSP5, E1 UBA1 and E2 UBC5. Post-translationally, the N-terminus is blocked.

It catalyses the reaction S-ubiquitinyl-[E1 ubiquitin-activating enzyme]-L-cysteine + [E2 ubiquitin-conjugating enzyme]-L-cysteine = [E1 ubiquitin-activating enzyme]-L-cysteine + S-ubiquitinyl-[E2 ubiquitin-conjugating enzyme]-L-cysteine.. The protein operates within protein modification; protein ubiquitination. Catalyzes the covalent attachment of ubiquitin to other proteins. Mediates the selective degradation of short-lived and abnormal proteins. The RSP5-UBA1-UBC5 ubiquitin ligase complex ubiquitinates RPO21 forming 'Lys-63'-linked polyubiquitin chains. The protein is Ubiquitin-conjugating enzyme E2-16 kDa (UBC5) of Saccharomyces cerevisiae (strain ATCC 204508 / S288c) (Baker's yeast).